A 96-amino-acid polypeptide reads, in one-letter code: Co-chaperonin GroES 2 (96 aa).

This sequence belongs to the GroES chaperonin family. As to quaternary structure, heptamer of 7 subunits arranged in a ring. Interacts with the chaperonin GroEL.

The protein resides in the cytoplasm. Together with the chaperonin GroEL, plays an essential role in assisting protein folding. The GroEL-GroES system forms a nano-cage that allows encapsulation of the non-native substrate proteins and provides a physical environment optimized to promote and accelerate protein folding. GroES binds to the apical surface of the GroEL ring, thereby capping the opening of the GroEL channel. This Vibrio parahaemolyticus serotype O3:K6 (strain RIMD 2210633) protein is Co-chaperonin GroES 2.